A 205-amino-acid chain; its full sequence is Glycerol-3-phosphate acyltransferase (205 aa).

The Periplasmic segment spans residues 1–3; the sequence is MSA. The helical transmembrane segment at 4-24 threads the bilayer; it reads IAPGMILFAYLCGSISSAILV. At 25 to 52 the chain is on the cytoplasmic side; it reads CRLCGLPDPRTSGSGNPGATNVLRMGGK. A helical membrane pass occupies residues 53–73; sequence GAALAVLIFDVLKGMLPVWGA. Over 74-80 the chain is Periplasmic; it reads YELGVSP. A helical transmembrane segment spans residues 81-101; it reads FWLGLIAIAACLGHIWPIFFG. Over 102 to 111 the chain is Cytoplasmic; that stretch reads FKGGKGVATA. A helical membrane pass occupies residues 112–132; it reads FGAIAPIGWDLTGVMAGTWLL. At 133–137 the chain is on the periplasmic side; the sequence is TVLLS. The helical transmembrane segment at 138–158 threads the bilayer; that stretch reads GYSSLGAIVSALIAPFYVWWF. Over 159-205 the chain is Cytoplasmic; the sequence is KPQFTFPVSMLSCLILLRHHDNIQRLWRRQETKIWTKLKRKREKDPE.

It belongs to the PlsY family. In terms of assembly, probably interacts with PlsX.

It is found in the cell inner membrane. It carries out the reaction sn-glycerol 3-phosphate + an acyl-CoA = a 1-acyl-sn-glycero-3-phosphate + CoA. The catalysed reaction is a fatty acyl-[ACP] + sn-glycerol 3-phosphate = a 1-acyl-sn-glycero-3-phosphate + holo-[ACP]. It participates in lipid metabolism; phospholipid metabolism. Its function is as follows. Catalyzes the transfer of an acyl group from acyl-ACP to glycerol-3-phosphate (G3P) to form lysophosphatidic acid (LPA). This enzyme can also utilize acyl-CoA as fatty acyl donor, but not acyl-PO(4). This Escherichia fergusonii (strain ATCC 35469 / DSM 13698 / CCUG 18766 / IAM 14443 / JCM 21226 / LMG 7866 / NBRC 102419 / NCTC 12128 / CDC 0568-73) protein is Glycerol-3-phosphate acyltransferase.